The following is a 323-amino-acid chain: MKVLWAALVVTLLAGCWADVQPEPELERELEPKVQQELEPEAGWQTGQPWEAALARFWDYLRWVQTLSDQVQEGVLNTQVTQELTALMDETMKEVKAYKAELDEQLGPMTSETQARVAKELQAAQARLRSDMEDVRNRLTQYRGELQAMLGQSSEELRARFASHMRKLRKRVLRDAEDLQRRLAVYKAGVREGAERSVSSIRERLWPLLEQARERNAKVGALATQPLLERADALGQQLRGQLEEMSSRARGHLEEMREQIQEVRVKMEEQADQIRQKAEAFQARLKSWFEPLLEDMQRQWDGLVEKVQAAVATIPTSKPVEEP.

A signal peptide spans 1-18 (MKVLWAALVVTLLAGCWA). A run of 8 repeats spans residues 86–107 (ALMD…EQLG), 108–129 (PMTS…ARLR), 130–151 (SDME…AMLG), 152–173 (QSSE…KRVL), 174–195 (RDAE…EGAE), 196–217 (RSVS…ERNA), 218–239 (KVGA…QQLR), and 240–261 (GQLE…EQIQ). Residues 86–261 (ALMDETMKEV…HLEEMREQIQ (176 aa)) are 8 X 22 AA approximate tandem repeats. Residue M149 is modified to Methionine sulfoxide. S153 bears the Phosphoserine mark. The interval 164 to 174 (HMRKLRKRVLR) is LDL and other lipoprotein receptors binding. Position 168-171 (168-171 (LRKR)) interacts with heparin. Residues 216 to 296 (NAKVGALATQ…SWFEPLLEDM (81 aa)) form a lipid-binding and lipoprotein association region. 235 to 242 (GQQLRGQL) is a heparin binding site. The homooligomerization stretch occupies residues 272 to 323 (DQIRQKAEAFQARLKSWFEPLLEDMQRQWDGLVEKVQAAVATIPTSKPVEEP). The segment at 284–296 (RLKSWFEPLLEDM) is specificity for association with VLDL.

The protein belongs to the apolipoprotein A1/A4/E family. As to quaternary structure, homotetramer. May interact with ABCA1; functionally associated with ABCA1 in the biogenesis of HDLs. May interact with APP/A4 amyloid-beta peptide; the interaction is extremely stable in vitro but its physiological significance is unclear. May interact with MAPT. May interact with MAP2. In the cerebrospinal fluid, interacts with secreted SORL1. Interacts with PMEL; this allows the loading of PMEL luminal fragment on ILVs to induce fibril nucleation. APOE exists as multiple glycosylated and sialylated glycoforms within cells and in plasma. The extent of glycosylation and sialylation are tissue and context specific. Post-translationally, glycated in plasma VLDL. In terms of processing, phosphorylated by FAM20C in the extracellular medium.

The protein resides in the secreted. The protein localises to the extracellular space. It localises to the extracellular matrix. It is found in the extracellular vesicle. Its subcellular location is the endosome. The protein resides in the multivesicular body. Its function is as follows. APOE is an apolipoprotein, a protein associating with lipid particles, that mainly functions in lipoprotein-mediated lipid transport between organs via the plasma and interstitial fluids. APOE is a core component of plasma lipoproteins and is involved in their production, conversion and clearance. Apolipoproteins are amphipathic molecules that interact both with lipids of the lipoprotein particle core and the aqueous environment of the plasma. As such, APOE associates with chylomicrons, chylomicron remnants, very low density lipoproteins (VLDL) and intermediate density lipoproteins (IDL) but shows a preferential binding to high-density lipoproteins (HDL). It also binds a wide range of cellular receptors including the LDL receptor/LDLR and the very low-density lipoprotein receptor/VLDLR that mediate the cellular uptake of the APOE-containing lipoprotein particles. Finally, APOE also has a heparin-binding activity and binds heparan-sulfate proteoglycans on the surface of cells, a property that supports the capture and the receptor-mediated uptake of APOE-containing lipoproteins by cells. This chain is Apolipoprotein E (APOE), found in Canis lupus familiaris (Dog).